We begin with the raw amino-acid sequence, 1073 residues long: Carbamoyl phosphate synthase large chain (1073 aa).

Residues 1 to 403 (MPKRTDIKSI…SLQKALRGLE (403 aa)) form a carboxyphosphate synthetic domain region. R129, R169, G175, G176, E208, L210, E215, G241, V242, H243, Q285, and E299 together coordinate ATP. The region spanning 133–328 (DKAMKDIGLE…IAKIAAKLAI (196 aa)) is the ATP-grasp 1 domain. Residues Q285, E299, and N301 each contribute to the Mg(2+) site. Mn(2+)-binding residues include Q285, E299, and N301. Residues 404-553 (VGACGLDPKV…YSTYEEECEA (150 aa)) are oligomerization domain. A carbamoyl phosphate synthetic domain region spans residues 554-935 (NPSTRDKIMI…AFAKAQMGAS (382 aa)). The ATP-grasp 2 domain occupies 678–869 (QQMVQRLSLL…LAMIAARVMA (192 aa)). Residues R714, H753, L755, E760, G785, V786, H787, S788, Q828, and E840 each coordinate ATP. Mg(2+) is bound by residues Q828, E840, and N842. Mn(2+)-binding residues include Q828, E840, and N842. The MGS-like domain occupies 936 to 1073 (EVLPTGGTAF…LQDLHAGLKA (138 aa)). Positions 936–1073 (EVLPTGGTAF…LQDLHAGLKA (138 aa)) are allosteric domain.

This sequence belongs to the CarB family. Composed of two chains; the small (or glutamine) chain promotes the hydrolysis of glutamine to ammonia, which is used by the large (or ammonia) chain to synthesize carbamoyl phosphate. Tetramer of heterodimers (alpha,beta)4. Requires Mg(2+) as cofactor. Mn(2+) is required as a cofactor.

It catalyses the reaction hydrogencarbonate + L-glutamine + 2 ATP + H2O = carbamoyl phosphate + L-glutamate + 2 ADP + phosphate + 2 H(+). It carries out the reaction hydrogencarbonate + NH4(+) + 2 ATP = carbamoyl phosphate + 2 ADP + phosphate + 2 H(+). It participates in amino-acid biosynthesis; L-arginine biosynthesis; carbamoyl phosphate from bicarbonate: step 1/1. The protein operates within pyrimidine metabolism; UMP biosynthesis via de novo pathway; (S)-dihydroorotate from bicarbonate: step 1/3. In terms of biological role, large subunit of the glutamine-dependent carbamoyl phosphate synthetase (CPSase). CPSase catalyzes the formation of carbamoyl phosphate from the ammonia moiety of glutamine, carbonate, and phosphate donated by ATP, constituting the first step of 2 biosynthetic pathways, one leading to arginine and/or urea and the other to pyrimidine nucleotides. The large subunit (synthetase) binds the substrates ammonia (free or transferred from glutamine from the small subunit), hydrogencarbonate and ATP and carries out an ATP-coupled ligase reaction, activating hydrogencarbonate by forming carboxy phosphate which reacts with ammonia to form carbamoyl phosphate. The chain is Carbamoyl phosphate synthase large chain from Pseudomonas putida (strain ATCC 47054 / DSM 6125 / CFBP 8728 / NCIMB 11950 / KT2440).